We begin with the raw amino-acid sequence, 432 residues long: Glutamate-1-semialdehyde 2,1-aminomutase (432 aa).

Residue lysine 272 is modified to N6-(pyridoxal phosphate)lysine.

Belongs to the class-III pyridoxal-phosphate-dependent aminotransferase family. HemL subfamily. Homodimer. It depends on pyridoxal 5'-phosphate as a cofactor.

Its subcellular location is the cytoplasm. The enzyme catalyses (S)-4-amino-5-oxopentanoate = 5-aminolevulinate. It functions in the pathway porphyrin-containing compound metabolism; protoporphyrin-IX biosynthesis; 5-aminolevulinate from L-glutamyl-tRNA(Glu): step 2/2. Its pathway is porphyrin-containing compound metabolism; chlorophyll biosynthesis. The sequence is that of Glutamate-1-semialdehyde 2,1-aminomutase from Trichodesmium erythraeum (strain IMS101).